We begin with the raw amino-acid sequence, 159 residues long: Transcription elongation factor GreA (159 aa).

The stretch at 7 to 72 (MTVRGAEKLR…IQEIESKLSN (66 aa)) forms a coiled coil.

The protein belongs to the GreA/GreB family.

Functionally, necessary for efficient RNA polymerase transcription elongation past template-encoded arresting sites. The arresting sites in DNA have the property of trapping a certain fraction of elongating RNA polymerases that pass through, resulting in locked ternary complexes. Cleavage of the nascent transcript by cleavage factors such as GreA or GreB allows the resumption of elongation from the new 3'terminus. GreA releases sequences of 2 to 3 nucleotides. The sequence is that of Transcription elongation factor GreA from Buchnera aphidicola subsp. Schizaphis graminum (strain Sg).